The following is a 151-amino-acid chain: MNKTYLPPQDIEGKKWYVIDAEGQRLGRLATAIAMIIRGKNKPTYTPHMDTGDFVIVVNAEKVTVTGKKSSQKLYRRHSGRPGGMKTEVFSKLQARLPQRIIEEAVFGMLPKNSLGRKLHNKLKVYPGSNHPHEAQKPEKLTIQTIPGGER.

The segment at 126–151 (YPGSNHPHEAQKPEKLTIQTIPGGER) is disordered. The segment covering 131 to 140 (HPHEAQKPEK) has biased composition (basic and acidic residues).

The protein belongs to the universal ribosomal protein uL13 family. In terms of assembly, part of the 50S ribosomal subunit.

This protein is one of the early assembly proteins of the 50S ribosomal subunit, although it is not seen to bind rRNA by itself. It is important during the early stages of 50S assembly. The protein is Large ribosomal subunit protein uL13 of Trichodesmium erythraeum (strain IMS101).